We begin with the raw amino-acid sequence, 41 residues long: Photosystem II reaction center protein L (41 aa).

A helical transmembrane segment spans residues 20–40; the sequence is SLYWGLLLIFVLAVPFSNYFF.

The protein belongs to the PsbL family. In terms of assembly, PSII is composed of 1 copy each of membrane proteins PsbA, PsbB, PsbC, PsbD, PsbE, PsbF, PsbH, PsbI, PsbJ, PsbK, PsbL, PsbM, PsbT, PsbX, PsbY, PsbZ, Psb30/Ycf12, at least 3 peripheral proteins of the oxygen-evolving complex and a large number of cofactors. It forms dimeric complexes.

The protein localises to the plastid. The protein resides in the chloroplast thylakoid membrane. In terms of biological role, one of the components of the core complex of photosystem II (PSII). PSII is a light-driven water:plastoquinone oxidoreductase that uses light energy to abstract electrons from H(2)O, generating O(2) and a proton gradient subsequently used for ATP formation. It consists of a core antenna complex that captures photons, and an electron transfer chain that converts photonic excitation into a charge separation. This subunit is found at the monomer-monomer interface and is required for correct PSII assembly and/or dimerization. The protein is Photosystem II reaction center protein L of Pinus koraiensis (Korean pine).